The sequence spans 281 residues: L-cysteine S-thiosulfotransferase subunit SoxA (281 aa).

The first 25 residues, 1 to 25 (MTKHGFLLATLVLAGATLPIGPVTA), serve as a signal peptide directing secretion. A disulfide bridge links Cys99 with Cys130. The 107-residue stretch at 175-281 (AAYEQGKRFY…LELNGPGARK (107 aa)) folds into the Cytochrome c domain. Residues Cys195 and His199 each contribute to the heme site. Arg238 provides a ligand contact to substrate. A heme-binding site is contributed by Cys242. Catalysis depends on Cys242, which acts as the Cysteine persulfide intermediate.

Belongs to the SoxA family. In terms of assembly, heterodimer of SoxA and SoxX. The cofactor is heme. Post-translationally, cysteine persulfide at Cys-242.

It localises to the periplasm. It carries out the reaction L-cysteinyl-[SoxY protein] + thiosulfate + 2 Fe(III)-[cytochrome c] = S-sulfosulfanyl-L-cysteinyl-[SoxY protein] + 2 Fe(II)-[cytochrome c] + 2 H(+). The enzyme catalyses S-sulfanyl-L-cysteinyl-[SoxY protein] + thiosulfate + 2 Fe(III)-[cytochrome c] = S-(2-sulfodisulfanyl)-L-cysteinyl-[SoxY protein] + 2 Fe(II)-[cytochrome c] + 2 H(+). C-type monoheme cytochrome, which is part of the SoxAX cytochrome complex involved in sulfur oxidation. The SoxAX complex catalyzes the formation of a heterodisulfide bond between the conserved cysteine residue on a sulfur carrier SoxYZ complex subunit SoxY and thiosulfate or other inorganic sulfur substrates. This leads to the intermediary formation of conspicuous sulfur globules inside of the cells. This Allochromatium vinosum (Chromatium vinosum) protein is L-cysteine S-thiosulfotransferase subunit SoxA.